A 429-amino-acid chain; its full sequence is Histidinol dehydrogenase (429 aa).

3 residues coordinate NAD(+): Tyr-127, Gln-188, and Asn-211. The substrate site is built by Ser-234, Gln-256, and His-259. Gln-256 and His-259 together coordinate Zn(2+). Active-site proton acceptor residues include Glu-324 and His-325. The substrate site is built by His-325, Asp-358, Glu-412, and His-417. Zn(2+) is bound at residue Asp-358. Residue His-417 participates in Zn(2+) binding.

The protein belongs to the histidinol dehydrogenase family. Zn(2+) is required as a cofactor.

The enzyme catalyses L-histidinol + 2 NAD(+) + H2O = L-histidine + 2 NADH + 3 H(+). Its pathway is amino-acid biosynthesis; L-histidine biosynthesis; L-histidine from 5-phospho-alpha-D-ribose 1-diphosphate: step 9/9. Catalyzes the sequential NAD-dependent oxidations of L-histidinol to L-histidinaldehyde and then to L-histidine. In Bacillus thuringiensis subsp. konkukian (strain 97-27), this protein is Histidinol dehydrogenase.